The chain runs to 413 residues: Multifunctional CCA protein (413 aa).

ATP-binding residues include glycine 8 and arginine 11. The CTP site is built by glycine 8 and arginine 11. Mg(2+)-binding residues include aspartate 21 and aspartate 23. Arginine 91, arginine 137, and arginine 140 together coordinate ATP. 3 residues coordinate CTP: arginine 91, arginine 137, and arginine 140. An HD domain is found at 228-329 (TGIHTLMVLE…VKLFDKADLW (102 aa)).

Belongs to the tRNA nucleotidyltransferase/poly(A) polymerase family. Bacterial CCA-adding enzyme type 1 subfamily. In terms of assembly, monomer. Can also form homodimers and oligomers. Mg(2+) is required as a cofactor. The cofactor is Ni(2+).

The catalysed reaction is a tRNA precursor + 2 CTP + ATP = a tRNA with a 3' CCA end + 3 diphosphate. It catalyses the reaction a tRNA with a 3' CCA end + 2 CTP + ATP = a tRNA with a 3' CCACCA end + 3 diphosphate. Catalyzes the addition and repair of the essential 3'-terminal CCA sequence in tRNAs without using a nucleic acid template. Adds these three nucleotides in the order of C, C, and A to the tRNA nucleotide-73, using CTP and ATP as substrates and producing inorganic pyrophosphate. tRNA 3'-terminal CCA addition is required both for tRNA processing and repair. Also involved in tRNA surveillance by mediating tandem CCA addition to generate a CCACCA at the 3' terminus of unstable tRNAs. While stable tRNAs receive only 3'-terminal CCA, unstable tRNAs are marked with CCACCA and rapidly degraded. This Shewanella loihica (strain ATCC BAA-1088 / PV-4) protein is Multifunctional CCA protein.